Here is a 490-residue protein sequence, read N- to C-terminus: Calcium-dependent protein kinase 12 (490 aa).

The region spanning 22-280 (YFLGQVLGQG…AHQVLCHPWI (259 aa)) is the Protein kinase domain. Residues 28–36 (LGQGQFGTT) and K51 each bind ATP. The Proton acceptor role is filled by D146. Phosphoserine is present on S186. The interval 286-316 (APDKPLDCAVVSRLKKFSAMNKLKKMALRVI) is autoinhibitory domain. EF-hand domains follow at residues 323 to 358 (EEIG…VGSE), 359 to 394 (LMES…LNKL), 395 to 430 (EREE…FGIN), and 434 to 464 (LDEM…GNGT). Ca(2+) is bound by residues D336, D338, S340, T342, E347, D372, D374, S376, T378, E383, D408, D410, S412, Y414, E419, D442, D444, D446, Q448, and E453.

The protein belongs to the protein kinase superfamily. Ser/Thr protein kinase family. CDPK subfamily. In terms of assembly, interacts weakly with DI19. In terms of tissue distribution, ubiquitously expressed.

It catalyses the reaction L-seryl-[protein] + ATP = O-phospho-L-seryl-[protein] + ADP + H(+). The enzyme catalyses L-threonyl-[protein] + ATP = O-phospho-L-threonyl-[protein] + ADP + H(+). Activated by calcium. Autophosphorylation may play an important role in the regulation of the kinase activity. May play a role in signal transduction pathways that involve calcium as a second messenger. The sequence is that of Calcium-dependent protein kinase 12 (CPK12) from Arabidopsis thaliana (Mouse-ear cress).